The sequence spans 130 residues: Small ribosomal subunit protein uS9 (130 aa).

It belongs to the universal ribosomal protein uS9 family.

The sequence is that of Small ribosomal subunit protein uS9 from Azotobacter vinelandii (strain DJ / ATCC BAA-1303).